The sequence spans 1392 residues: DNA-directed RNA polymerase subunit beta (1392 aa).

The segment at 1372–1392 is disordered; sequence LSSYAEEDPDEGPEALPEAAE.

The protein belongs to the RNA polymerase beta chain family. As to quaternary structure, the RNAP catalytic core consists of 2 alpha, 1 beta, 1 beta' and 1 omega subunit. When a sigma factor is associated with the core the holoenzyme is formed, which can initiate transcription.

The enzyme catalyses RNA(n) + a ribonucleoside 5'-triphosphate = RNA(n+1) + diphosphate. Functionally, DNA-dependent RNA polymerase catalyzes the transcription of DNA into RNA using the four ribonucleoside triphosphates as substrates. The protein is DNA-directed RNA polymerase subunit beta of Sphingopyxis alaskensis (strain DSM 13593 / LMG 18877 / RB2256) (Sphingomonas alaskensis).